Consider the following 508-residue polypeptide: Pyruvate kinase (508 aa).

A substrate-binding site is contributed by arginine 56. The K(+) site is built by asparagine 58, serine 60, aspartate 90, and threonine 91. Residue 58–61 (NFSH) participates in ATP binding. Residues arginine 97 and lysine 185 each coordinate ATP. Residue glutamate 251 participates in Mg(2+) binding. Residues glycine 274, aspartate 275, and threonine 307 each coordinate substrate. Aspartate 275 is a Mg(2+) binding site.

Belongs to the pyruvate kinase family. Homotetramer. Mg(2+) serves as cofactor. Requires K(+) as cofactor.

The catalysed reaction is pyruvate + ATP = phosphoenolpyruvate + ADP + H(+). The protein operates within carbohydrate degradation; glycolysis; pyruvate from D-glyceraldehyde 3-phosphate: step 5/5. With respect to regulation, regulated by phosphoenolpyruvate substrate and is allosterically activated by ribose-5-phosphate, AMP and other nucleoside monophosphates but not by fructose-1,6-bisphosphate. The sequence is that of Pyruvate kinase (pyk) from Mycoplasma genitalium (strain ATCC 33530 / DSM 19775 / NCTC 10195 / G37) (Mycoplasmoides genitalium).